The following is a 170-amino-acid chain: Bifunctional protein PyrR (170 aa).

Positions 90 to 102 (LVLVDDVLMSGRT) match the PRPP-binding motif.

Belongs to the purine/pyrimidine phosphoribosyltransferase family. PyrR subfamily.

It catalyses the reaction UMP + diphosphate = 5-phospho-alpha-D-ribose 1-diphosphate + uracil. Its function is as follows. Regulates the transcription of the pyrimidine nucleotide (pyr) operon in response to exogenous pyrimidines. Functionally, also displays a weak uracil phosphoribosyltransferase activity which is not physiologically significant. In Pseudomonas aeruginosa (strain LESB58), this protein is Bifunctional protein PyrR.